A 298-amino-acid polypeptide reads, in one-letter code: Protein DR_1172 (298 aa).

3 LEA-like repeats span residues 48 to 117 (DAAQ…NVGQ), 128 to 197 (DQAK…DVAQ), and 201 to 270 (QGAQ…AGKQ). The span at 174–193 (VQDVKADASKAADQAKDKAQ) shows a compositional bias: basic and acidic residues. A disordered region spans residues 174–298 (VQDVKADASK…MTGNTNTRKN (125 aa)). Residues 194-208 (DVAQNVKQGAQQAAS) are compositionally biased toward low complexity. Over residues 209 to 233 (DAKDKVQDVKADASRAADQAKDKAQ) the composition is skewed to basic and acidic residues. Residues 275-298 (GSTTNNAGTAGNTGMTGNTNTRKN) show a composition bias toward low complexity.

It belongs to the LEA type 1 family.

This is Protein DR_1172 from Deinococcus radiodurans (strain ATCC 13939 / DSM 20539 / JCM 16871 / CCUG 27074 / LMG 4051 / NBRC 15346 / NCIMB 9279 / VKM B-1422 / R1).